An 80-amino-acid chain; its full sequence is Conotoxin Vi6.2 (80 aa).

Residues 1–22 (MKLTCVLITTVLFLTASQLITA) form the signal peptide. A propeptide spanning residues 23-47 (DYSRDKRQYRAVRLRDEMRNFKGAR) is cleaved from the precursor. 3 cysteine pairs are disulfide-bonded: cysteine 49–cysteine 62, cysteine 56–cysteine 67, and cysteine 61–cysteine 77. A 4-hydroxyproline mark is found at proline 60 and proline 63.

The protein belongs to the conotoxin O1 superfamily. In terms of tissue distribution, expressed by the venom duct.

It localises to the secreted. Its function is as follows. Ion channel inhibitor that inhibits the increase in intracellular calcium upon depolarization in DRG neurons. In vivo, both intraperitoneal and intracranial injections into mice induce hyperactivity. This chain is Conotoxin Vi6.2, found in Conus virgo (Virgin cone).